Reading from the N-terminus, the 1565-residue chain is Synemin (1565 aa).

The segment at 1 to 10 is head; it reads MLSWRLQTGP. The interval 11 to 49 is coil 1A; it reads EKAELQELNARLYDYVCRVRELERENLLLEEELRGRRGR. The interaction with DMD and UTRN stretch occupies residues 11 to 320; that stretch reads EKAELQELNA…YRALLEGESN (310 aa). The IF rod domain maps to 11–322; it reads EKAELQELNA…ALLEGESNPE (312 aa). Residues 50–58 form a linker 1 region; it reads EGLWAEGQA. The coil 1B stretch occupies residues 59–163; sequence RCAEEARSLR…ELRARAASLT (105 aa). Residues 164-186 are linker 12; the sequence is MHFRARATGPAAPPPRLREVHDS. A coil 2 region spans residues 187–300; that stretch reads YALLVAESWR…LRDYQDLLQV (114 aa). The segment at 301-1565 is tail; sequence KTGLSLEVAT…EEEENDGHWF (1265 aa). The tract at residues 401-421 is disordered; the sequence is SGYSSSATTQQENSYGKAVSS. A compositionally biased stretch (polar residues) spans 402–421; sequence GYSSSATTQQENSYGKAVSS. Ser429 is subject to Phosphoserine. Residues 472 to 609 are disordered; that stretch reads YRDRRDKVAA…VKDAGGGTGR (138 aa). The span at 498–577 shows a compositional bias: basic and acidic residues; that stretch reads KKTEVKATRE…KEKSVREREV (80 aa). Phosphothreonine occurs at positions 598 and 651. Phosphoserine is present on residues Ser653 and Ser777. A compositionally biased stretch (basic and acidic residues) spans 1019–1040; that stretch reads LSKDEASEMEKAVESVVRESLS. The disordered stretch occupies residues 1019 to 1060; the sequence is LSKDEASEMEKAVESVVRESLSRQRSPAPGSPDEEGGAEAPA. Residues Ser1044, Ser1049, Ser1077, Ser1087, Ser1181, and Ser1184 each carry the phosphoserine modification. The tract at residues 1080-1105 is disordered; the sequence is SEVAGGASHSSGQRTPQGPVSATVEV. The span at 1087-1105 shows a compositional bias: polar residues; that stretch reads SHSSGQRTPQGPVSATVEV. The tract at residues 1152–1463 is interaction with TLN1 and VCL; it reads VSAGGDLSQA…GPKETSFTFQ (312 aa). Disordered stretches follow at residues 1198–1221 and 1332–1415; these read EAWG…GRHS and QLGE…ETSE. The interaction with DMD and UTRN stretch occupies residues 1244 to 1563; that stretch reads GKVGDYFATE…DNEEEENDGH (320 aa). A compositionally biased stretch (polar residues) spans 1354-1379; that stretch reads ATHSHTSGRQTVMTEKSTFQSVVSES. Residue Ser1435 is modified to Phosphoserine. Arg1487 carries the omega-N-methylarginine modification. The disordered stretch occupies residues 1505-1525; it reads FKASAGEGDQAHREQGKEQAM. Positions 1513 to 1525 are enriched in basic and acidic residues; that stretch reads DQAHREQGKEQAM.

It belongs to the intermediate filament family. Interacts with GFAP and VIM. Isoform 1 interacts with TLN1 and VCL. Isoform 2 interacts with DES and DTNA. Isoform 1 and isoform 2 interact with DMD and UTRN. In terms of tissue distribution, isoform 2 is strongly detected in adult heart, fetal skeletal muscles and fetal heart. Isoform 1 is weakly detected in fetal heart and also in fetal skeletal muscle. Isoform 1 and isoform 2 are detected in adult bladder (at protein level). The mRNA is predominantly expressed in heart and muscle with some expression in brain which may be due to tissue-specific isoforms.

The protein resides in the cytoplasm. It localises to the cytoskeleton. It is found in the cell junction. Its subcellular location is the adherens junction. In terms of biological role, type-VI intermediate filament (IF) which plays an important cytoskeletal role within the muscle cell cytoskeleton. It forms heteromeric IFs with desmin and/or vimentin, and via its interaction with cytoskeletal proteins alpha-dystrobrevin, dystrophin, talin-1, utrophin and vinculin, is able to link these heteromeric IFs to adherens-type junctions, such as to the costameres, neuromuscular junctions, and myotendinous junctions within striated muscle cells. This Homo sapiens (Human) protein is Synemin.